Here is an 803-residue protein sequence, read N- to C-terminus: Zinc finger X-linked protein ZXDB (803 aa).

Disordered regions lie at residues 1–91 (MEIP…GGDD), 120–140 (EAEE…AGPT), and 218–260 (AAHP…GPRG). Residues 13–26 (LQGGGGGGIPAGGG) show a composition bias toward gly residues. 10 C2H2-type zinc fingers span residues 271-295 (YLCP…LLTH), 304-328 (FKCP…LQSH), 334-358 (FGCP…MKGH), 364-386 (FKCE…QRSH), 393-417 (YQCA…NRAH), 424-448 (FSCS…LRSH), 454-478 (FLCD…KRKH), 484-508 (FMCP…SITH), 514-538 (FVCP…SKKH), and 547-572 (SRCP…VKRH). The required for interaction with ZXDC stretch occupies residues 271–577 (YLCPEAQCGQ…MVKRHKVGQD (307 aa)). The interval 576-703 (QDLLAQLEAA…NMDEVSSVSV (128 aa)) is required for transcriptional activation.

Belongs to the ZXD family. In terms of assembly, self-associates. Interacts with ZXDC and CIITA. As to expression, may be expressed in brain, heart, kidney, liver, lung, muscle and placenta.

Its subcellular location is the nucleus. Functionally, cooperates with CIITA to promote transcription of MHC class I and MHC class II genes. The sequence is that of Zinc finger X-linked protein ZXDB (ZXDB) from Homo sapiens (Human).